A 468-amino-acid chain; its full sequence is Probable ubiquitin carboxyl-terminal hydrolase R319 (468 aa).

The 421-residue stretch at 42–462 (TGIMNLGNTC…NAYILFYIRS (421 aa)) folds into the USP domain. Cysteine 51 functions as the Nucleophile in the catalytic mechanism. Residue histidine 420 is the Proton acceptor of the active site.

The protein belongs to the peptidase C19 family.

The enzyme catalyses Thiol-dependent hydrolysis of ester, thioester, amide, peptide and isopeptide bonds formed by the C-terminal Gly of ubiquitin (a 76-residue protein attached to proteins as an intracellular targeting signal).. This is Probable ubiquitin carboxyl-terminal hydrolase R319 from Acanthamoeba polyphaga (Amoeba).